A 160-amino-acid polypeptide reads, in one-letter code: Transcription elongation factor GreA (160 aa).

The stretch at 53 to 73 forms a coiled coil; it reads AREEQGMVEARIRDIEGRLQN.

Belongs to the GreA/GreB family.

Its function is as follows. Necessary for efficient RNA polymerase transcription elongation past template-encoded arresting sites. The arresting sites in DNA have the property of trapping a certain fraction of elongating RNA polymerases that pass through, resulting in locked ternary complexes. Cleavage of the nascent transcript by cleavage factors such as GreA or GreB allows the resumption of elongation from the new 3'terminus. GreA releases sequences of 2 to 3 nucleotides. The protein is Transcription elongation factor GreA of Pseudomonas putida (strain ATCC 47054 / DSM 6125 / CFBP 8728 / NCIMB 11950 / KT2440).